Consider the following 488-residue polypeptide: Glutamyl-tRNA(Gln) amidotransferase subunit A (488 aa).

Residues K77 and S152 each act as charge relay system in the active site. Residue S176 is the Acyl-ester intermediate of the active site.

Belongs to the amidase family. GatA subfamily. As to quaternary structure, heterotrimer of A, B and C subunits.

It catalyses the reaction L-glutamyl-tRNA(Gln) + L-glutamine + ATP + H2O = L-glutaminyl-tRNA(Gln) + L-glutamate + ADP + phosphate + H(+). Its function is as follows. Allows the formation of correctly charged Gln-tRNA(Gln) through the transamidation of misacylated Glu-tRNA(Gln) in organisms which lack glutaminyl-tRNA synthetase. The reaction takes place in the presence of glutamine and ATP through an activated gamma-phospho-Glu-tRNA(Gln). The protein is Glutamyl-tRNA(Gln) amidotransferase subunit A of Streptococcus uberis (strain ATCC BAA-854 / 0140J).